The following is a 287-amino-acid chain: mRNA-capping enzyme small subunit (287 aa).

As to quaternary structure, heterodimer of a large and a small subunit.

The protein resides in the virion. The enzyme catalyses a 5'-end (5'-triphosphoguanosine)-ribonucleoside in mRNA + S-adenosyl-L-methionine = a 5'-end (N(7)-methyl 5'-triphosphoguanosine)-ribonucleoside in mRNA + S-adenosyl-L-homocysteine. Catalyzes the last reaction in the mRNA cap formation pathway. The polypeptide is mRNA-capping enzyme small subunit (Erythrocebus patas (Red guenon)).